We begin with the raw amino-acid sequence, 692 residues long: Elongation factor G (692 aa).

Positions 8–282 (AKTRNIGIMA…AVIAYLPSPL (275 aa)) constitute a tr-type G domain. Residues 17–24 (AHVDAGKT), 81–85 (DTPGH), and 135–138 (NKMD) each bind GTP.

It belongs to the TRAFAC class translation factor GTPase superfamily. Classic translation factor GTPase family. EF-G/EF-2 subfamily.

The protein localises to the cytoplasm. Catalyzes the GTP-dependent ribosomal translocation step during translation elongation. During this step, the ribosome changes from the pre-translocational (PRE) to the post-translocational (POST) state as the newly formed A-site-bound peptidyl-tRNA and P-site-bound deacylated tRNA move to the P and E sites, respectively. Catalyzes the coordinated movement of the two tRNA molecules, the mRNA and conformational changes in the ribosome. This Streptococcus pyogenes serotype M49 (strain NZ131) protein is Elongation factor G.